Reading from the N-terminus, the 187-residue chain is UPF0232 protein Mb0004 (187 aa).

Basic and acidic residues-rich tracts occupy residues 1–17 (MTGSVDRPDQNRGERLM) and 35–45 (AARARGQDAGR). 3 disordered regions span residues 1–23 (MTGSVDRPDQNRGERLMKSPGLD), 35–75 (AARA…DPQP), and 168–187 (PSWRKGPRHIAGRGPRDTYG).

The protein belongs to the UPF0232 family.

The protein is UPF0232 protein Mb0004 of Mycobacterium bovis (strain ATCC BAA-935 / AF2122/97).